Reading from the N-terminus, the 599-residue chain is Elongation factor 4 (599 aa).

In terms of domain architecture, tr-type G spans 2 to 184 (KNIRNFSIIA…RLVRDIPPPE (183 aa)). GTP contacts are provided by residues 14 to 19 (DHGKST) and 131 to 134 (NKID).

Belongs to the TRAFAC class translation factor GTPase superfamily. Classic translation factor GTPase family. LepA subfamily.

It is found in the cell inner membrane. It catalyses the reaction GTP + H2O = GDP + phosphate + H(+). In terms of biological role, required for accurate and efficient protein synthesis under certain stress conditions. May act as a fidelity factor of the translation reaction, by catalyzing a one-codon backward translocation of tRNAs on improperly translocated ribosomes. Back-translocation proceeds from a post-translocation (POST) complex to a pre-translocation (PRE) complex, thus giving elongation factor G a second chance to translocate the tRNAs correctly. Binds to ribosomes in a GTP-dependent manner. In Klebsiella pneumoniae subsp. pneumoniae (strain ATCC 700721 / MGH 78578), this protein is Elongation factor 4.